We begin with the raw amino-acid sequence, 279 residues long: Tryptophan synthase alpha chain (279 aa).

Residues E50 and D61 each act as proton acceptor in the active site.

Belongs to the TrpA family. In terms of assembly, tetramer of two alpha and two beta chains.

It carries out the reaction (1S,2R)-1-C-(indol-3-yl)glycerol 3-phosphate + L-serine = D-glyceraldehyde 3-phosphate + L-tryptophan + H2O. It participates in amino-acid biosynthesis; L-tryptophan biosynthesis; L-tryptophan from chorismate: step 5/5. In terms of biological role, the alpha subunit is responsible for the aldol cleavage of indoleglycerol phosphate to indole and glyceraldehyde 3-phosphate. This is Tryptophan synthase alpha chain from Brucella abortus (strain S19).